The sequence spans 688 residues: Phosphoinositide 3-phosphatase (688 aa).

In terms of domain architecture, Myotubularin phosphatase spans 155 to 637 (SWDIYDPIKE…KKVQWWWQLY (483 aa)). The active-site Phosphocysteine intermediate is the Cys397. The span at 647-668 (ELRHKRDSVPISVDKKSKEHSN) shows a compositional bias: basic and acidic residues. The tract at residues 647–672 (ELRHKRDSVPISVDKKSKEHSNSDGG) is disordered.

It belongs to the protein-tyrosine phosphatase family. Non-receptor class myotubularin subfamily.

The protein resides in the cytoplasm. It catalyses the reaction a 1,2-diacyl-sn-glycero-3-phospho-(1D-myo-inositol-3-phosphate) + H2O = a 1,2-diacyl-sn-glycero-3-phospho-(1D-myo-inositol) + phosphate. In terms of biological role, lipid phosphatase which dephosphorylates phosphatidylinositol 3-monophosphate (PI3P). Involved in the control of PI3P-dependent signaling and in the maintenance of endosomal system integrity. The chain is Phosphoinositide 3-phosphatase from Saccharomyces cerevisiae (strain ATCC 204508 / S288c) (Baker's yeast).